Consider the following 712-residue polypeptide: Ribosome-releasing factor 2, mitochondrial (712 aa).

The transit peptide at 1–28 (MQYSLLSAQLRCSRFLLRQQAPFINRCY) directs the protein to the mitochondrion. The region spanning 30–309 (DDIRNIGILA…AVNAYLPTPN (280 aa)) is the tr-type G domain. GTP contacts are provided by residues 39–46 (AHIDAGKT), 103–107 (DTPGH), and 157–160 (NKMD).

The protein belongs to the TRAFAC class translation factor GTPase superfamily. Classic translation factor GTPase family. EF-G/EF-2 subfamily.

The protein localises to the mitochondrion. Mitochondrial GTPase that mediates the disassembly of ribosomes from messenger RNA at the termination of mitochondrial protein biosynthesis. Not involved in the GTP-dependent ribosomal translocation step during translation elongation. The protein is Ribosome-releasing factor 2, mitochondrial of Drosophila virilis (Fruit fly).